The sequence spans 364 residues: Probable dual-specificity RNA methyltransferase RlmN (364 aa).

Glu107 serves as the catalytic Proton acceptor. A Radical SAM core domain is found at 113 to 346; it reads HDYGNSVCVT…ATIRREQGSD (234 aa). Residues Cys120 and Cys351 are joined by a disulfide bond. Positions 127, 131, and 134 each coordinate [4Fe-4S] cluster. S-adenosyl-L-methionine contacts are provided by residues 177–178, Ser209, 232–234, and Asn308; these read GE and SLH. The S-methylcysteine intermediate role is filled by Cys351.

This sequence belongs to the radical SAM superfamily. RlmN family. [4Fe-4S] cluster serves as cofactor.

The protein localises to the cytoplasm. It catalyses the reaction adenosine(2503) in 23S rRNA + 2 reduced [2Fe-2S]-[ferredoxin] + 2 S-adenosyl-L-methionine = 2-methyladenosine(2503) in 23S rRNA + 5'-deoxyadenosine + L-methionine + 2 oxidized [2Fe-2S]-[ferredoxin] + S-adenosyl-L-homocysteine. It carries out the reaction adenosine(37) in tRNA + 2 reduced [2Fe-2S]-[ferredoxin] + 2 S-adenosyl-L-methionine = 2-methyladenosine(37) in tRNA + 5'-deoxyadenosine + L-methionine + 2 oxidized [2Fe-2S]-[ferredoxin] + S-adenosyl-L-homocysteine. Functionally, specifically methylates position 2 of adenine 2503 in 23S rRNA and position 2 of adenine 37 in tRNAs. Confers resistance to some classes of antibiotics. In Staphylococcus aureus (strain bovine RF122 / ET3-1), this protein is Probable dual-specificity RNA methyltransferase RlmN.